A 425-amino-acid polypeptide reads, in one-letter code: L-lysine N6-monooxygenase (425 aa).

8-14 serves as a coordination point for FAD; the sequence is IGVGTGP.

Belongs to the lysine N(6)-hydroxylase/L-ornithine N(5)-oxygenase family. The cofactor is FAD.

The protein resides in the cytoplasm. The protein localises to the cell membrane. The catalysed reaction is L-lysine + NADPH + O2 = N(6)-hydroxy-L-lysine + NADP(+) + H2O. Its pathway is siderophore biosynthesis; aerobactin biosynthesis. Functionally, flavoprotein monooxygenase required for N-hydroxylation of lysine. Involved in the biosynthesis of the siderophore aerobactin which is a chelator that mediates the high-affinity iron transport systems induced by the organism under iron-stressed conditions. The sequence is that of L-lysine N6-monooxygenase from Escherichia coli.